We begin with the raw amino-acid sequence, 139 residues long: Small ribosomal subunit protein bS16 (139 aa).

Residues 85-108 (ESKSGKKPAKKATTKEASAKKPTD) form a disordered region. A compositionally biased stretch (basic and acidic residues) spans 97–108 (TTKEASAKKPTD).

Belongs to the bacterial ribosomal protein bS16 family.

This Leuconostoc mesenteroides subsp. mesenteroides (strain ATCC 8293 / DSM 20343 / BCRC 11652 / CCM 1803 / JCM 6124 / NCDO 523 / NBRC 100496 / NCIMB 8023 / NCTC 12954 / NRRL B-1118 / 37Y) protein is Small ribosomal subunit protein bS16.